A 764-amino-acid chain; its full sequence is 5-methyltetrahydropteroyltriglutamate--homocysteine methyltransferase (764 aa).

Residues 16 to 19 (RELK) and lysine 117 each bind 5-methyltetrahydropteroyltri-L-glutamate. Residues 442 to 444 (IGS) and glutamate 495 each bind L-homocysteine. L-methionine contacts are provided by residues 442–444 (IGS) and glutamate 495. Residues 526–527 (RC) and tryptophan 572 contribute to the 5-methyltetrahydropteroyltri-L-glutamate site. Aspartate 610 is a binding site for L-homocysteine. Aspartate 610 serves as a coordination point for L-methionine. Glutamate 616 serves as a coordination point for 5-methyltetrahydropteroyltri-L-glutamate. 3 residues coordinate Zn(2+): histidine 652, cysteine 654, and glutamate 676. Histidine 705 functions as the Proton donor in the catalytic mechanism. Cysteine 737 contributes to the Zn(2+) binding site.

The protein belongs to the vitamin-B12 independent methionine synthase family. It depends on Zn(2+) as a cofactor.

The catalysed reaction is 5-methyltetrahydropteroyltri-L-glutamate + L-homocysteine = tetrahydropteroyltri-L-glutamate + L-methionine. It participates in amino-acid biosynthesis; L-methionine biosynthesis via de novo pathway; L-methionine from L-homocysteine (MetE route): step 1/1. Catalyzes the transfer of a methyl group from 5-methyltetrahydrofolate to homocysteine resulting in methionine formation. The polypeptide is 5-methyltetrahydropteroyltriglutamate--homocysteine methyltransferase (Bordetella bronchiseptica (strain ATCC BAA-588 / NCTC 13252 / RB50) (Alcaligenes bronchisepticus)).